We begin with the raw amino-acid sequence, 315 residues long: T-box transcription factor tbx-8 (315 aa).

A DNA-binding region (T-box) is located at residues 11-195 (EDQDKLWNLF…FNPFAKGFRE (185 aa)). Basic and acidic residues predominate over residues 193-203 (FREGSQSDRKR). Disordered stretches follow at residues 193 to 235 (FREG…SVSP) and 293 to 315 (PPPSLKNVKKEEQEDIEQEINVV). Residues 205–225 (SPSADDSTTDESSSQVSSPQP) are compositionally biased toward low complexity. Acidic residues predominate over residues 305–315 (QEDIEQEINVV).

The protein localises to the nucleus. In terms of biological role, transcription factor. Involved in the control of early morphogenesis of the intestine, hypodermis and body-wall muscle. Involved in regulating expression of vab-7. Appears to have partially redundant function to tbx-9. The polypeptide is T-box transcription factor tbx-8 (tbx-8) (Caenorhabditis elegans).